Reading from the N-terminus, the 1193-residue chain is uncharacterized protein (1193 aa).

An N-terminal signal peptide occupies residues 1-25 (MKIKFINYLLLFFIIFLNYNGFVKS). Topologically, residues 26–1172 (DCYQELDLVL…PQDPSDELST (1147 aa)) are extracellular. 18 N-linked (GlcNAc...) asparagine glycosylation sites follow: asparagine 90, asparagine 183, asparagine 226, asparagine 265, asparagine 281, asparagine 345, asparagine 357, asparagine 436, asparagine 516, asparagine 552, asparagine 583, asparagine 627, asparagine 712, asparagine 765, asparagine 822, asparagine 938, asparagine 1038, and asparagine 1092. A helical membrane pass occupies residues 1173–1193 (SSFVQVNLLFLSILIFTIFIF).

It is found in the membrane. This is an uncharacterized protein from Dictyostelium discoideum (Social amoeba).